We begin with the raw amino-acid sequence, 720 residues long: Pollen receptor-like kinase 1 (720 aa).

The LRR 1; degenerate repeat unit spans residues 40–64 (LCSRGHLLIIFLLLVSPFNDAAVDV). An LRR 2; degenerate repeat occupies 123 to 146 (LGVLCYEGDVWGLQLENLDLSGVI). LRR repeat units lie at residues 154–179 (LHFLRTLSFMNNSFKGQCLIGISLEP), 226–248 (LPQVFELSLENNRFTGSIPHFPP), and 249–273 (NVLKVLNLSNNQLEGPIPPALSLMD). The segment at 288–319 (LESACNSPSQEANNPDSRNSSTISGQSSTDVI) is disordered. The segment covering 291 to 317 (ACNSPSQEANNPDSRNSSTISGQSSTD) has biased composition (polar residues). The helical transmembrane segment at 330 to 350 (MLIVAVCLVVLCLLIVLILII) threads the bilayer. Polar residues-rich tracts occupy residues 356–382 (SSSQNPQPVESNYSNNDRDQNAFTSSA) and 389–405 (LSGNSTYSNNQHSNSNK). Residues 356 to 409 (SSSQNPQPVESNYSNNDRDQNAFTSSAPDDHVTLSGNSTYSNNQHSNSNKAEAP) form a disordered region. One can recognise a Protein kinase domain in the interval 434 to 702 (RASAEVLGSG…KEVVQSIQSL (269 aa)). Residues 440-448 (LGSGNLGSS) and lysine 462 contribute to the ATP site.

Belongs to the protein kinase superfamily. In terms of assembly, interacts with KIP1. Autophosphorylated. In terms of tissue distribution, expressed in mature pollen grains and pollen tubes, but not in style, petal, leaf, root or sepal. Very low expression in the ovary.

Its subcellular location is the microsome membrane. The protein localises to the cytoplasm. The enzyme catalyses L-seryl-[protein] + ATP = O-phospho-L-seryl-[protein] + ADP + H(+). The catalysed reaction is L-threonyl-[protein] + ATP = O-phospho-L-threonyl-[protein] + ADP + H(+). It catalyses the reaction L-tyrosyl-[protein] + ATP = O-phospho-L-tyrosyl-[protein] + ADP + H(+). Dual-specificity kinase with both serine/threonine and tyrosine kinase activities. Required for postmeiotic development of microspores. Involved in embryo sac development at the late stages of megagametogenesis. Involved in the phosphorylation of KIP1. The chain is Pollen receptor-like kinase 1 from Petunia integrifolia (Violet-flowered petunia).